We begin with the raw amino-acid sequence, 98 residues long: NADH-ubiquinone oxidoreductase chain 4L (98 aa).

Helical transmembrane passes span 1–21 (MSLT…GLLM), 29–49 (SLLC…ITIL), and 61–81 (IILL…LVMV).

Belongs to the complex I subunit 4L family. As to quaternary structure, core subunit of respiratory chain NADH dehydrogenase (Complex I) which is composed of 45 different subunits.

Its subcellular location is the mitochondrion inner membrane. The enzyme catalyses a ubiquinone + NADH + 5 H(+)(in) = a ubiquinol + NAD(+) + 4 H(+)(out). Functionally, core subunit of the mitochondrial membrane respiratory chain NADH dehydrogenase (Complex I) which catalyzes electron transfer from NADH through the respiratory chain, using ubiquinone as an electron acceptor. Part of the enzyme membrane arm which is embedded in the lipid bilayer and involved in proton translocation. The sequence is that of NADH-ubiquinone oxidoreductase chain 4L (MT-ND4L) from Artibeus jamaicensis (Jamaican fruit-eating bat).